Consider the following 149-residue polypeptide: Histone H2B.3, sperm (149 aa).

Residues 1–57 form a disordered region; it reads MPRSPAKTSPRKGSPRKGSPRKGSPSRKASPKRGGKGAKRAGKGGRRRRVVKRRRRR. Short sequence motifs (SPKK motif) lie at residues 4–7, 9–12, 14–17, 19–22, 24–27, and 30–33; these read SPAK, SPRK, SPSR, and SPKR. The segment covering 9–20 has biased composition (basic residues); the sequence is SPRKGSPRKGSP. Ser19, Ser24, and Ser30 each carry phosphoserine. The segment covering 29 to 57 has biased composition (basic residues); the sequence is ASPKRGGKGAKRAGKGGRRRRVVKRRRRR. Ser136 carries an O-linked (GlcNAc) serine glycan. A Glycyl lysine isopeptide (Lys-Gly) (interchain with G-Cter in ubiquitin) cross-link involves residue Lys144.

Belongs to the histone H2B family. The nucleosome is a histone octamer containing two molecules each of H2A, H2B, H3 and H4 assembled in one H3-H4 heterotetramer and two H2A-H2B heterodimers. The octamer wraps approximately 147 bp of DNA. Monoubiquitination of Lys-144 gives a specific tag for epigenetic transcriptional activation and is also prerequisite for histone H3 'Lys-4' and 'Lys-79' methylation. In terms of processing, phosphorylated on SPKK motifs 4, 5 and 6; which may regulate DNA binding. Dephosphorylated during maturation of spermatids to mature sperm and rephosphorylated at fertilization. Post-translationally, glcNAcylation at Ser-136 promotes monoubiquitination of Lys-144. It fluctuates in response to extracellular glucose, and associates with transcribed genes.

Its subcellular location is the nucleus. It localises to the chromosome. Core component of nucleosome. Nucleosomes wrap and compact DNA into chromatin, limiting DNA accessibility to the cellular machineries which require DNA as a template. Histones thereby play a central role in transcription regulation, DNA repair, DNA replication and chromosomal stability. DNA accessibility is regulated via a complex set of post-translational modifications of histones, also called histone code, and nucleosome remodeling. The polypeptide is Histone H2B.3, sperm (Parechinus angulosus (Angulate sea urchin)).